Reading from the N-terminus, the 141-residue chain is MTKTAKVNDIVRDWVVLDAKDKVFGRLITEIAVLLRGKHRPFYTPNVDCGDFVVVINANKVKFSGMKLEDKEYFTHSGYFGSTKSKTLQEMLEKAPEKLYHLAVRGMLPKTKLGKAMIKKLKVYRDDKHPHTAQTSKKDAK.

This sequence belongs to the universal ribosomal protein uL13 family. Part of the 50S ribosomal subunit.

This protein is one of the early assembly proteins of the 50S ribosomal subunit, although it is not seen to bind rRNA by itself. It is important during the early stages of 50S assembly. The chain is Large ribosomal subunit protein uL13 from Helicobacter pylori (strain P12).